The sequence spans 465 residues: Cruciform DNA-recognizing protein 1 (465 aa).

Disordered regions lie at residues 107-227 (EAGG…VPNP) and 247-276 (RLNKKEEVPEPVAGPIVESSVTEKSPALPQ). The span at 127-151 (NRKKNKRNNKKRRSKLKKKSTKNNK) shows a compositional bias: basic residues. A phosphoserine mark is found at Ser-153 and Ser-156. Acidic residues predominate over residues 156–165 (SLDDNEEEDG). Positions 160-161 (NE) are X-DNA-binding. A compositionally biased stretch (low complexity) spans 166-177 (VTGTTTEDVTGT). Thr-182 bears the Phosphothreonine mark. Phosphoserine is present on Ser-271. Thr-295 is modified (phosphothreonine). A disordered region spans residues 300-465 (AVTPLINEPE…FFGKLKKLFK (166 aa)). A phosphoserine mark is found at Ser-319 and Ser-343. Residues 337-363 (LVEKRESTEGVLDGSKKVENKAKKDEE) show a composition bias toward basic and acidic residues. A Phosphothreonine modification is found at Thr-366. Composition is skewed to basic and acidic residues over residues 385-398 (AEGRKSPAVSEEKE) and 404-428 (EKGSKEVKRSETSKEKKPSAKEVKK). Ser-394 is modified (phosphoserine). Residue Ser-440 is modified to Phosphoserine. A compositionally biased stretch (basic residues) spans 451-465 (KKKTGFFGKLKKLFK).

It belongs to the CRP1/MDG1 family. Cleaved in the vicinity of position 160 to give an X-DNA-binding N-terminal subpeptide and a non-DNA-binding C-terminal subpeptide.

Functionally, cruciform DNA-binding protein which exerts an enhancing effect on the cleavage of cruciform DNA (X-DNA) by endonuclease VII from bacteriophage T4. This Saccharomyces cerevisiae (strain ATCC 204508 / S288c) (Baker's yeast) protein is Cruciform DNA-recognizing protein 1 (CRP1).